The sequence spans 380 residues: Cytochrome b (380 aa).

A run of 4 helical transmembrane segments spans residues 34–54 (FGSLLGMCLILQITTGIFLAM), 78–99 (WLLRGLHANGASIFFICLYFHI), 114–134 (WYTGIMLLFLTMATAFMGYIL), and 179–199 (FFTLHFLTPFIISSLTTIHLL). His-84 and His-98 together coordinate heme b. The heme b site is built by His-183 and His-197. Residue His-202 participates in a ubiquinone binding. The next 4 helical transmembrane spans lie at 227 to 247 (YKDLLGVNLLMIGLLTLTLFL), 289 to 309 (LGGVLALLSSVTILFIMPTLH), 321 to 341 (FTQILFWSPTADLVILTWIGA), and 348 to 368 (FIMIGQTASVFYFTLILLLIP).

The protein belongs to the cytochrome b family. The cytochrome bc1 complex contains 3 respiratory subunits (MT-CYB, CYC1 and UQCRFS1), 2 core proteins (UQCRC1 and UQCRC2) and probably 6 low-molecular weight proteins. The cofactor is heme b.

The protein localises to the mitochondrion inner membrane. Component of the ubiquinol-cytochrome c reductase complex (complex III or cytochrome b-c1 complex) that is part of the mitochondrial respiratory chain. The b-c1 complex mediates electron transfer from ubiquinol to cytochrome c. Contributes to the generation of a proton gradient across the mitochondrial membrane that is then used for ATP synthesis. In Pelomedusa subrufa (African side-necked turtle), this protein is Cytochrome b (MT-CYB).